The primary structure comprises 28 residues: Turritoxin F21-2 (28 aa).

In terms of tissue distribution, expressed by the venom duct.

Its subcellular location is the secreted. Its function is as follows. Potent inhibitor of human alpha-3-beta-2 nAChRs (IC(50)=566.2 nM). Irreversibly inhibits the acetylcholine-induced response on human alpha-7/CHRNA7 (55% inhibition at 5.6 uM) and alpha-3-beta-2/CHRNA3-CHRNB2 (91% inhibition) nAChRs. The sequence is that of Turritoxin F21-2 from Polystira nobilis (Sea snail).